The following is a 1026-amino-acid chain: Cadherin-like and PC-esterase domain-containing protein 1 (1026 aa).

The signal sequence occupies residues 1 to 34 (MVCRPVFPCRRRFCPRPFLVGLVVAICLFYQTLT). 6 N-linked (GlcNAc...) asparagine glycosylation sites follow: asparagine 251, asparagine 404, asparagine 413, asparagine 737, asparagine 791, and asparagine 985.

Belongs to the PC-esterase family.

This Homo sapiens (Human) protein is Cadherin-like and PC-esterase domain-containing protein 1 (CPED1).